Reading from the N-terminus, the 235-residue chain is Ubiquitin-like-conjugating enzyme ATG10 (235 aa).

Cys196 acts as the Glycyl thioester intermediate in catalysis.

It belongs to the ATG10 family. In terms of assembly, forms homooligomers. Interacts with ATG7 and ATG12.

It is found in the preautophagosomal structure membrane. E2-like enzyme required for the cytoplasm to vacuole transport (Cvt), autophagy and nucleophagy. Acts as an E2-like enzyme that catalyzes the conjugation of ATG12 to ATG5. ATG12 conjugation to ATG5 is required for proper localization of ATG8 to the preautophagosomal structure (PAS). Likely serves as an ATG5-recognition molecule. Autophagy is required for proper vegetative growth, asexual/sexual reproduction, and full virulence. Autophagy is particularly involved in the biosynthesis of deoxynivalenol (DON), an important virulence determinant. The protein is Ubiquitin-like-conjugating enzyme ATG10 of Gibberella zeae (strain ATCC MYA-4620 / CBS 123657 / FGSC 9075 / NRRL 31084 / PH-1) (Wheat head blight fungus).